The primary structure comprises 1118 residues: Isoleucine--tRNA ligase (1118 aa).

Positions 64–74 (PFANGLPHYGH) match the 'HIGH' region motif. The 'KMSKS' region motif lies at 647-651 (KLSKR). Position 650 (lysine 650) interacts with ATP.

The protein belongs to the class-I aminoacyl-tRNA synthetase family. IleS type 2 subfamily. In terms of assembly, monomer. The cofactor is Zn(2+).

It is found in the cytoplasm. It carries out the reaction tRNA(Ile) + L-isoleucine + ATP = L-isoleucyl-tRNA(Ile) + AMP + diphosphate. Its function is as follows. Catalyzes the attachment of isoleucine to tRNA(Ile). As IleRS can inadvertently accommodate and process structurally similar amino acids such as valine, to avoid such errors it has two additional distinct tRNA(Ile)-dependent editing activities. One activity is designated as 'pretransfer' editing and involves the hydrolysis of activated Val-AMP. The other activity is designated 'posttransfer' editing and involves deacylation of mischarged Val-tRNA(Ile). This is Isoleucine--tRNA ligase from Ehrlichia ruminantium (strain Gardel).